The chain runs to 78 residues: MLILTRRPGESLYLGDTIKITVLSVQGKQIKIGLDVPGDMTVYREEVYMRVRDQNRQALETSDADLLAATQLWHAKKK.

The protein belongs to the CsrA/RsmA family. As to quaternary structure, homodimer; the beta-strands of each monomer intercalate to form a hydrophobic core, while the alpha-helices form wings that extend away from the core.

The protein localises to the cytoplasm. Its function is as follows. A translational regulator that binds mRNA to regulate translation initiation and/or mRNA stability. Usually binds in the 5'-UTR at or near the Shine-Dalgarno sequence preventing ribosome-binding, thus repressing translation. Its main target seems to be the major flagellin gene, while its function is anatagonized by FliW. This is Translational regulator CsrA from Oleidesulfovibrio alaskensis (strain ATCC BAA-1058 / DSM 17464 / G20) (Desulfovibrio alaskensis).